Reading from the N-terminus, the 287-residue chain is Polyamine aminopropyltransferase (287 aa).

The 234-residue stretch at 5–238 (EIWYETLHAN…GIMTFAWASQ (234 aa)) folds into the PABS domain. Residue Gln33 participates in S-methyl-5'-thioadenosine binding. Residues His64 and Asp88 each coordinate spermidine. S-methyl-5'-thioadenosine-binding positions include Glu108 and 140-141 (DG). Asp158 serves as the catalytic Proton acceptor. 158–161 (DCTD) provides a ligand contact to spermidine. Pro165 contacts S-methyl-5'-thioadenosine.

This sequence belongs to the spermidine/spermine synthase family. Homodimer or homotetramer.

Its subcellular location is the cytoplasm. It catalyses the reaction S-adenosyl 3-(methylsulfanyl)propylamine + putrescine = S-methyl-5'-thioadenosine + spermidine + H(+). It functions in the pathway amine and polyamine biosynthesis; spermidine biosynthesis; spermidine from putrescine: step 1/1. Functionally, catalyzes the irreversible transfer of a propylamine group from the amino donor S-adenosylmethioninamine (decarboxy-AdoMet) to putrescine (1,4-diaminobutane) to yield spermidine. The polypeptide is Polyamine aminopropyltransferase (Serratia proteamaculans (strain 568)).